The sequence spans 154 residues: Myoglobin (154 aa).

The Globin domain maps to 2 to 148 (GLSDGEWQLV…FRNDIAAKYK (147 aa)). Serine 4 is modified (phosphoserine). Histidine 65 contributes to the nitrite binding site. An O2-binding site is contributed by histidine 65. Position 68 is a phosphothreonine (threonine 68). Heme b is bound at residue histidine 94.

In terms of assembly, monomer.

The protein localises to the cytoplasm. It is found in the sarcoplasm. The enzyme catalyses Fe(III)-heme b-[protein] + nitric oxide + H2O = Fe(II)-heme b-[protein] + nitrite + 2 H(+). It catalyses the reaction H2O2 + AH2 = A + 2 H2O. Monomeric heme protein which primary function is to store oxygen and facilitate its diffusion within muscle tissues. Reversibly binds oxygen through a pentacoordinated heme iron and enables its timely and efficient release as needed during periods of heightened demand. Depending on the oxidative conditions of tissues and cells, and in addition to its ability to bind oxygen, it also has a nitrite reductase activity whereby it regulates the production of bioactive nitric oxide. Under stress conditions, like hypoxia and anoxia, it also protects cells against reactive oxygen species thanks to its pseudoperoxidase activity. In Hystrix cristata (North African crested porcupine), this protein is Myoglobin.